A 191-amino-acid polypeptide reads, in one-letter code: Small ribosomal subunit protein uS7 (191 aa).

A disordered region spans residues Asn56 to Leu80.

It belongs to the universal ribosomal protein uS7 family. In terms of assembly, part of the 30S ribosomal subunit. Contacts proteins S9 and S11.

Its function is as follows. One of the primary rRNA binding proteins, it binds directly to 16S rRNA where it nucleates assembly of the head domain of the 30S subunit. Is located at the subunit interface close to the decoding center, probably blocks exit of the E-site tRNA. The protein is Small ribosomal subunit protein uS7 of Coxiella burnetii (strain CbuG_Q212) (Coxiella burnetii (strain Q212)).